The sequence spans 428 residues: Adenylosuccinate synthetase 1 (428 aa).

GTP is bound by residues 12 to 18 and 40 to 42; these read GDEGKGK and GHT. Residue aspartate 13 is the Proton acceptor of the active site. The Mg(2+) site is built by aspartate 13 and glycine 40. IMP-binding positions include 13–16, 38–41, threonine 133, arginine 147, asparagine 224, threonine 239, and arginine 303; these read DEGK and NAGH. Catalysis depends on histidine 41, which acts as the Proton donor. Substrate is bound at residue 299–305; it reads TTTGRRR. Residues arginine 305, 331–333, and 413–415 contribute to the GTP site; these read KLD and GVG.

This sequence belongs to the adenylosuccinate synthetase family. As to quaternary structure, homodimer. It depends on Mg(2+) as a cofactor.

It is found in the cytoplasm. The enzyme catalyses IMP + L-aspartate + GTP = N(6)-(1,2-dicarboxyethyl)-AMP + GDP + phosphate + 2 H(+). Its pathway is purine metabolism; AMP biosynthesis via de novo pathway; AMP from IMP: step 1/2. Plays an important role in the de novo pathway and in the salvage pathway of purine nucleotide biosynthesis. Catalyzes the first committed step in the biosynthesis of AMP from IMP. In Laccaria bicolor (strain S238N-H82 / ATCC MYA-4686) (Bicoloured deceiver), this protein is Adenylosuccinate synthetase 1.